The following is a 481-amino-acid chain: ATP synthase subunit beta (481 aa).

Position 160–167 (160–167) interacts with ATP; the sequence is GGAGVGKT.

Belongs to the ATPase alpha/beta chains family. F-type ATPases have 2 components, CF(1) - the catalytic core - and CF(0) - the membrane proton channel. CF(1) has five subunits: alpha(3), beta(3), gamma(1), delta(1), epsilon(1). CF(0) has three main subunits: a(1), b(2) and c(9-12). The alpha and beta chains form an alternating ring which encloses part of the gamma chain. CF(1) is attached to CF(0) by a central stalk formed by the gamma and epsilon chains, while a peripheral stalk is formed by the delta and b chains.

The protein localises to the cell inner membrane. The catalysed reaction is ATP + H2O + 4 H(+)(in) = ADP + phosphate + 5 H(+)(out). Functionally, produces ATP from ADP in the presence of a proton gradient across the membrane. The catalytic sites are hosted primarily by the beta subunits. The polypeptide is ATP synthase subunit beta (Myxococcus xanthus (strain DK1622)).